A 421-amino-acid polypeptide reads, in one-letter code: MIDMLVLRIPFKSSLVSERLDSKGNYVSHVNLAEVARLSGLTLAAHTVEYAIDGDLTVSGLKHPYESLPSHYAGIALKIFEGGKNFEPCVELKASPAKLLQGHNVFGPTSFELCGLEFFGAFAAAMPELYDLCDVTNTVVGRIDVTFSAKVANDHIANQVISFLRNVSNGQTKKTRALDYETTVMWNEGSRHRTLVAYLKHHEVQAQIKRLQKKKSSHLTIYEKNCLEVLSNPDLQLYAVGLVRFEARLHTRFFENFGLPRKFFDIVKYQDNYESGSFNLICDLWKKSFKDLFDAFKGSDMNVYDDSKVYDALINNFSSVTKSGNISNSKANRLFGFYRRLVNEGYDNVAQTMERTTFWRSLKELTSVGLSKAQLMNLSTDNNVVPLVQMINVDFSQQYPEWYVEPVSIFNRSNVVSINAA.

Belongs to the inovirus G2P protein family.

The enzyme catalyses ATP + (deoxyribonucleotide)n-3'-hydroxyl + 5'-phospho-(deoxyribonucleotide)m = (deoxyribonucleotide)n+m + AMP + diphosphate.. Functionally, isoform G2P plays an essential role in viral DNA replication. Binds the origin of replication and cleaves the dsDNA replicative form I (RFI) and becomes covalently bound to it via phosphotyrosine bond, generating the dsDNA replicative form II (RFII). In turn, viral DNA replication initiates at the 3'-OH of the cleavage site. After one round of rolling circle synthesis, protein G2P is linked to the newly synthesized ssDNA and joins the ends of the displaced strand to generate a circular single-stranded molecule ready to be packed into a virion. In terms of biological role, isoform G10P protein binds to double-stranded DNA and prevents hydrolysis by nucleases. Additionally, G10P is an inhibitor of DNA replication and may have a role in the transition from semiconservative replicative form DNA replication to single-stranded DNA synthesis in the life cycle. The protein is Replication-associated protein G2P (II) of Escherichia coli (Bacteriophage IKe).